The sequence spans 631 residues: 1-deoxy-D-xylulose-5-phosphate synthase (631 aa).

Residues His74 and 115–117 (GHS) contribute to the thiamine diphosphate site. Asp146 lines the Mg(2+) pocket. Thiamine diphosphate is bound by residues 147 to 148 (GA), Asn175, Tyr286, and Glu368. A Mg(2+)-binding site is contributed by Asn175.

This sequence belongs to the transketolase family. DXPS subfamily. In terms of assembly, homodimer. The cofactor is Mg(2+). It depends on thiamine diphosphate as a cofactor.

It carries out the reaction D-glyceraldehyde 3-phosphate + pyruvate + H(+) = 1-deoxy-D-xylulose 5-phosphate + CO2. The protein operates within metabolic intermediate biosynthesis; 1-deoxy-D-xylulose 5-phosphate biosynthesis; 1-deoxy-D-xylulose 5-phosphate from D-glyceraldehyde 3-phosphate and pyruvate: step 1/1. Catalyzes the acyloin condensation reaction between C atoms 2 and 3 of pyruvate and glyceraldehyde 3-phosphate to yield 1-deoxy-D-xylulose-5-phosphate (DXP). The polypeptide is 1-deoxy-D-xylulose-5-phosphate synthase (Natranaerobius thermophilus (strain ATCC BAA-1301 / DSM 18059 / JW/NM-WN-LF)).